The chain runs to 252 residues: Pyridoxine 5'-phosphate synthase (252 aa).

Asparagine 12 provides a ligand contact to 3-amino-2-oxopropyl phosphate. 14 to 15 contributes to the 1-deoxy-D-xylulose 5-phosphate binding site; the sequence is DH. A 3-amino-2-oxopropyl phosphate-binding site is contributed by arginine 23. Histidine 48 functions as the Proton acceptor in the catalytic mechanism. The 1-deoxy-D-xylulose 5-phosphate site is built by arginine 50 and histidine 55. Glutamate 75 serves as the catalytic Proton acceptor. Threonine 105 serves as a coordination point for 1-deoxy-D-xylulose 5-phosphate. Histidine 199 functions as the Proton donor in the catalytic mechanism. 3-amino-2-oxopropyl phosphate contacts are provided by residues glycine 200 and 221-222; that span reads GH.

The protein belongs to the PNP synthase family. In terms of assembly, homooctamer; tetramer of dimers.

It is found in the cytoplasm. The catalysed reaction is 3-amino-2-oxopropyl phosphate + 1-deoxy-D-xylulose 5-phosphate = pyridoxine 5'-phosphate + phosphate + 2 H2O + H(+). It functions in the pathway cofactor biosynthesis; pyridoxine 5'-phosphate biosynthesis; pyridoxine 5'-phosphate from D-erythrose 4-phosphate: step 5/5. Catalyzes the complicated ring closure reaction between the two acyclic compounds 1-deoxy-D-xylulose-5-phosphate (DXP) and 3-amino-2-oxopropyl phosphate (1-amino-acetone-3-phosphate or AAP) to form pyridoxine 5'-phosphate (PNP) and inorganic phosphate. The protein is Pyridoxine 5'-phosphate synthase of Cereibacter sphaeroides (strain ATCC 17029 / ATH 2.4.9) (Rhodobacter sphaeroides).